The sequence spans 584 residues: Phenylalanine--tRNA ligase beta subunit (584 aa).

A B5 domain is found at F290–P369. 4 residues coordinate Mg(2+): D347, D353, D356, and D357.

It belongs to the phenylalanyl-tRNA synthetase beta subunit family. Type 2 subfamily. In terms of assembly, tetramer of two alpha and two beta subunits. Mg(2+) is required as a cofactor.

It is found in the cytoplasm. The enzyme catalyses tRNA(Phe) + L-phenylalanine + ATP = L-phenylalanyl-tRNA(Phe) + AMP + diphosphate + H(+). The polypeptide is Phenylalanine--tRNA ligase beta subunit (Haloarcula marismortui (strain ATCC 43049 / DSM 3752 / JCM 8966 / VKM B-1809) (Halobacterium marismortui)).